The sequence spans 391 residues: Succinyl-diaminopimelate desuccinylase (391 aa).

H78 contributes to the Zn(2+) binding site. The active site involves D80. D111 serves as a coordination point for Zn(2+). E145 functions as the Proton acceptor in the catalytic mechanism. Zn(2+) contacts are provided by E146, E174, and H360.

This sequence belongs to the peptidase M20A family. DapE subfamily. In terms of assembly, homodimer. Requires Zn(2+) as cofactor. Co(2+) serves as cofactor.

It carries out the reaction N-succinyl-(2S,6S)-2,6-diaminopimelate + H2O = (2S,6S)-2,6-diaminopimelate + succinate. Its pathway is amino-acid biosynthesis; L-lysine biosynthesis via DAP pathway; LL-2,6-diaminopimelate from (S)-tetrahydrodipicolinate (succinylase route): step 3/3. Functionally, catalyzes the hydrolysis of N-succinyl-L,L-diaminopimelic acid (SDAP), forming succinate and LL-2,6-diaminopimelate (DAP), an intermediate involved in the bacterial biosynthesis of lysine and meso-diaminopimelic acid, an essential component of bacterial cell walls. The chain is Succinyl-diaminopimelate desuccinylase from Albidiferax ferrireducens (strain ATCC BAA-621 / DSM 15236 / T118) (Rhodoferax ferrireducens).